The chain runs to 433 residues: Serine hydroxymethyltransferase (433 aa).

A (6S)-5,6,7,8-tetrahydrofolate-binding site is contributed by 121–123; it reads AHV. Lysine 227 carries the post-translational modification N6-(pyridoxal phosphate)lysine. (6S)-5,6,7,8-tetrahydrofolate is bound at residue glutamate 243.

Belongs to the SHMT family. As to quaternary structure, homodimer. It depends on pyridoxal 5'-phosphate as a cofactor.

The protein localises to the cytoplasm. It participates in amino-acid biosynthesis; glycine biosynthesis; glycine from L-serine: step 1/1. In terms of biological role, catalyzes the reversible interconversion of serine and glycine with a modified folate serving as the one-carbon carrier. Also exhibits a pteridine-independent aldolase activity toward beta-hydroxyamino acids, producing glycine and aldehydes, via a retro-aldol mechanism. This chain is Serine hydroxymethyltransferase, found in Saccharolobus islandicus (strain Y.N.15.51 / Yellowstone #2) (Sulfolobus islandicus).